A 506-amino-acid chain; its full sequence is Galactose/methyl galactoside import ATP-binding protein MglA (506 aa).

ABC transporter domains are found at residues 14 to 249 (LEMS…VGRS) and 264 to 506 (VILE…SLHL). Position 46 to 53 (46 to 53 (GENGAGKS)) interacts with ATP.

The protein belongs to the ABC transporter superfamily. Galactose/methyl galactoside importer (TC 3.A.1.2.3) family. As to quaternary structure, the complex is composed of one ATP-binding protein (MglA), two transmembrane proteins (MglC) and a solute-binding protein (MglB).

Its subcellular location is the cell inner membrane. The catalysed reaction is D-galactose(out) + ATP + H2O = D-galactose(in) + ADP + phosphate + H(+). It catalyses the reaction methyl beta-D-galactoside(out) + ATP + H2O = methyl beta-D-galactoside(in) + ADP + phosphate + H(+). Its function is as follows. Part of the ABC transporter complex MglABC involved in galactose/methyl galactoside import. Responsible for energy coupling to the transport system. The chain is Galactose/methyl galactoside import ATP-binding protein MglA from Escherichia coli O157:H7.